A 592-amino-acid polypeptide reads, in one-letter code: NADH-quinone oxidoreductase subunit C/D (592 aa).

An NADH dehydrogenase I subunit C region spans residues 1–183; that stretch reads MSAAQSPTAQ…DPYTLTVEGQ (183 aa). The NADH dehydrogenase I subunit D stretch occupies residues 207–592; it reads DYMFLNLGPN…IDFVMADVDR (386 aa).

It in the N-terminal section; belongs to the complex I 30 kDa subunit family. This sequence in the C-terminal section; belongs to the complex I 49 kDa subunit family. NDH-1 is composed of 13 different subunits. Subunits NuoB, CD, E, F, and G constitute the peripheral sector of the complex.

The protein localises to the cell inner membrane. It carries out the reaction a quinone + NADH + 5 H(+)(in) = a quinol + NAD(+) + 4 H(+)(out). Functionally, NDH-1 shuttles electrons from NADH, via FMN and iron-sulfur (Fe-S) centers, to quinones in the respiratory chain. The immediate electron acceptor for the enzyme in this species is believed to be ubiquinone. Couples the redox reaction to proton translocation (for every two electrons transferred, four hydrogen ions are translocated across the cytoplasmic membrane), and thus conserves the redox energy in a proton gradient. The sequence is that of NADH-quinone oxidoreductase subunit C/D from Chromohalobacter salexigens (strain ATCC BAA-138 / DSM 3043 / CIP 106854 / NCIMB 13768 / 1H11).